A 473-amino-acid polypeptide reads, in one-letter code: Ribosomal RNA small subunit methyltransferase F (473 aa).

Residues 123–129, E147, D174, and D192 contribute to the S-adenosyl-L-methionine site; that span reads AAAPGSK. C245 functions as the Nucleophile in the catalytic mechanism.

It belongs to the class I-like SAM-binding methyltransferase superfamily. RsmB/NOP family.

The protein resides in the cytoplasm. The catalysed reaction is cytidine(1407) in 16S rRNA + S-adenosyl-L-methionine = 5-methylcytidine(1407) in 16S rRNA + S-adenosyl-L-homocysteine + H(+). In terms of biological role, specifically methylates the cytosine at position 1407 (m5C1407) of 16S rRNA. The chain is Ribosomal RNA small subunit methyltransferase F from Vibrio cholerae serotype O1 (strain ATCC 39315 / El Tor Inaba N16961).